The following is a 432-amino-acid chain: Asparagine--tRNA ligase (432 aa).

It belongs to the class-II aminoacyl-tRNA synthetase family. As to quaternary structure, homodimer.

The protein resides in the cytoplasm. It carries out the reaction tRNA(Asn) + L-asparagine + ATP = L-asparaginyl-tRNA(Asn) + AMP + diphosphate + H(+). The polypeptide is Asparagine--tRNA ligase (Lactobacillus johnsonii (strain CNCM I-12250 / La1 / NCC 533)).